The sequence spans 437 residues: Integrase (437 aa).

One can recognise a Core-binding (CB) domain in the interval 73 to 158 (WTVERWLTHW…TARTAFGEAY (86 aa)). Residues 179–428 (EEVEPLEVED…DSVRNDVADR (250 aa)) form the Tyr recombinase domain. Residues R214, K245, H379, R382, and W405 contribute to the active site. Y414 acts as the O-(3'-phospho-DNA)-tyrosine intermediate in catalysis.

It belongs to the 'phage' integrase family.

Functionally, is a recombinase (or integrase), catalyzing the cutting and rejoining of the recombining DNA molecules. The protein is Integrase (int) of Saccharopolyspora erythraea (Streptomyces erythraeus).